Reading from the N-terminus, the 314-residue chain is FHA domain-containing protein DDL (314 aa).

Over residues 1–10 (MAPSSRSPSP) the composition is skewed to low complexity. Residues 1 to 146 (MAPSSRSPSP…NVEEDSVARM (146 aa)) form a disordered region. Positions 18–127 (ARGEKEIGRS…AIASRHDEGS (110 aa)) are enriched in basic and acidic residues. At Ser-133 the chain carries Phosphoserine. An FHA domain is found at 219-282 (YLFGRERRIA…NKTYINESPI (64 aa)).

In terms of assembly, interacts with DCL1 (via N-terminus). As to expression, expressed in roots, lateral roots, vascular strands of roots and leaves, vegetative meristems, pollen and developing seeds.

Its subcellular location is the nucleus. In terms of biological role, involved in the microRNA (miRNA) and short interfering RNA (siRNA) biogenesis. May facilitate DCL1 to access or recognize primary miRNAs. Binds RNA non-specifically. The polypeptide is FHA domain-containing protein DDL (DDL) (Arabidopsis thaliana (Mouse-ear cress)).